A 363-amino-acid polypeptide reads, in one-letter code: Spermatogenesis-associated protein 22 (363 aa).

Polar residues-rich tracts occupy residues 1-12 (MKRSLNENSARS) and 145-157 (SCPM…QQKQ). Disordered stretches follow at residues 1–51 (MKRS…DNYD) and 145–169 (SCPM…LPRN).

As to quaternary structure, component of a multiprotein complex with MEIOB and RPA2. Interacts with MEIOB. Interacts with the complex BRME1:HSF2BP:BRCA2. In terms of tissue distribution, expressed in testis.

Its subcellular location is the chromosome. Meiosis-specific protein required for homologous recombination in meiosis I. The polypeptide is Spermatogenesis-associated protein 22 (SPATA22) (Macaca fascicularis (Crab-eating macaque)).